The sequence spans 625 residues: Chaperone protein HtpG (625 aa).

Residues Met-1–Arg-341 form an a; substrate-binding region. The interval Glu-342 to Lys-551 is b. The interval Ile-552 to Val-625 is c.

This sequence belongs to the heat shock protein 90 family. Homodimer.

It is found in the cytoplasm. Functionally, molecular chaperone. Has ATPase activity. The polypeptide is Chaperone protein HtpG (Oceanobacillus iheyensis (strain DSM 14371 / CIP 107618 / JCM 11309 / KCTC 3954 / HTE831)).